We begin with the raw amino-acid sequence, 396 residues long: NADH-quinone oxidoreductase subunit D 1 (396 aa).

Belongs to the complex I 49 kDa subunit family. NDH-1 is composed of 14 different subunits. Subunits NuoB, C, D, E, F, and G constitute the peripheral sector of the complex.

Its subcellular location is the cell inner membrane. The catalysed reaction is a quinone + NADH + 5 H(+)(in) = a quinol + NAD(+) + 4 H(+)(out). Its function is as follows. NDH-1 shuttles electrons from NADH, via FMN and iron-sulfur (Fe-S) centers, to quinones in the respiratory chain. The immediate electron acceptor for the enzyme in this species is believed to be ubiquinone. Couples the redox reaction to proton translocation (for every two electrons transferred, four hydrogen ions are translocated across the cytoplasmic membrane), and thus conserves the redox energy in a proton gradient. In Beijerinckia indica subsp. indica (strain ATCC 9039 / DSM 1715 / NCIMB 8712), this protein is NADH-quinone oxidoreductase subunit D 1.